The chain runs to 418 residues: Beta-arrestin-1 (418 aa).

The interval 1–163 (MGDKGTRVFK…LEEKIHKRNS (163 aa)) is interaction with SRC. An interaction with CHRM2 region spans residues 45–86 (PEYLKERRVYVTLTCAFRYGREDLDVLGLTFRKDLFVANVQS). At Y47 the chain carries Phosphotyrosine. Positions 250, 255, 324, and 326 each coordinate 1D-myo-inositol hexakisphosphate. The segment at 318-418 (IVSYKVKVKL…GTGSPHLNNR (101 aa)) is interaction with TRAF6. Disordered stretches follow at residues 353–374 (HPKPKEEPPHREVPESETPVDT) and 397–418 (KGMKDDKDEEDDGTGSPHLNNR). The span at 355–366 (KPKEEPPHREVP) shows a compositional bias: basic and acidic residues. Residue S412 is modified to Phosphoserine. Position 412 is a phosphoserine; by GRK5 (S412).

The protein belongs to the arrestin family. Monomer. Homodimer. Homooligomer; the self-association is mediated by InsP6-binding. Heterooligomer with ARRB2; the association is mediated by InsP6-binding. Interacts with ADRB2 (phosphorylated). Interacts with CHRM2 (phosphorylated). Interacts with LHCGR. Interacts with CYTH2 and CASR. Interacts with AP2B1 (dephosphorylated at 'Tyr-737'); phosphorylation of AP2B1 at 'Tyr-737' disrupts the interaction. Interacts (dephosphorylated at Ser-412) with CLTC. Interacts with CCR2 and GRK2. Interacts with CRR5. Interacts with PTAFR (phosphorylated on serine residues). Interacts with CLTC and MAP2K3. Interacts with CREB1. Interacts with TRAF6. Interacts with IGF1R and MDM2. Interacts with C5AR1. Interacts with PDE4D. Interacts with SRC (via the SH3 domain and the protein kinase domain); the interaction is independent of the phosphorylation state of SRC C-terminus. Interacts with TACR1. Interacts with RAF1. Interacts with CHUK, IKBKB and MAP3K14. Interacts with DVL1; the interaction is enhanced by phosphorylation of DVL1. Interacts with DVL2; the interaction is enhanced by phosphorylation of DVL2. Interacts with IGF1R. Associates with MAP kinase p38. Part of a MAPK signaling complex consisting of TACR1, ARRB1, SRC, MAPK1 (activated) and MAPK3 (activated). Part of a MAPK signaling complex consisting of F2RL1, ARRB1, RAF1, MAPK1 (activated) and MAPK3 (activated). Interacts with GPR143. Interacts with MAP2K4/MKK4. Interacts with HCK and CXCR1 (phosphorylated). Interacts with ACKR3 and ACKR4. Interacts with ARRDC1; the interaction is direct. Interacts with GPR61, GPR62 and GPR135. Post-translationally, constitutively phosphorylated at Ser-412 in the cytoplasm. At the plasma membrane, is rapidly dephosphorylated, a process that is required for clathrin binding and beta-2 adrenergic receptor/ADRB2 endocytosis but not for ADRB2 binding and desensitization. Once internalized, is rephosphorylated. The ubiquitination status appears to regulate the formation and trafficking of beta-arrestin-GPCR complexes and signaling. Ubiquitination appears to occur GPCR-specific. Ubiquitinated by MDM2; the ubiquitination is required for rapid internalization of ADRB2. Deubiquitinated by USP33; the deubiquitination leads to a dissociation of the beta-arrestin-GPCR complex. Stimulation of a class A GPCR, such as ADRB2, induces transient ubiquitination and subsequently promotes association with USP33. Predominantly localized in neuronal tissues and in the spleen.

Its subcellular location is the cytoplasm. The protein localises to the nucleus. It is found in the cell membrane. It localises to the membrane. The protein resides in the clathrin-coated pit. Its subcellular location is the cell projection. The protein localises to the pseudopodium. It is found in the cytoplasmic vesicle. Functions in regulating agonist-mediated G-protein coupled receptor (GPCR) signaling by mediating both receptor desensitization and resensitization processes. During homologous desensitization, beta-arrestins bind to the GPRK-phosphorylated receptor and sterically preclude its coupling to the cognate G-protein; the binding appears to require additional receptor determinants exposed only in the active receptor conformation. The beta-arrestins target many receptors for internalization by acting as endocytic adapters (CLASPs, clathrin-associated sorting proteins) and recruiting the GPRCs to the adapter protein 2 complex 2 (AP-2) in clathrin-coated pits (CCPs). However, the extent of beta-arrestin involvement appears to vary significantly depending on the receptor, agonist and cell type. Internalized arrestin-receptor complexes traffic to intracellular endosomes, where they remain uncoupled from G-proteins. Two different modes of arrestin-mediated internalization occur. Class A receptors, like ADRB2, OPRM1, ENDRA, D1AR and ADRA1B dissociate from beta-arrestin at or near the plasma membrane and undergo rapid recycling. Class B receptors, like AVPR2, AGTR1, NTSR1, TRHR and TACR1 internalize as a complex with arrestin and traffic with it to endosomal vesicles, presumably as desensitized receptors, for extended periods of time. Receptor resensitization then requires that receptor-bound arrestin is removed so that the receptor can be dephosphorylated and returned to the plasma membrane. Involved in internalization of P2RY4 and UTP-stimulated internalization of P2RY2. Involved in phosphorylation-dependent internalization of OPRD1 ands subsequent recycling. Involved in the degradation of cAMP by recruiting cAMP phosphodiesterases to ligand-activated receptors. Beta-arrestins function as multivalent adapter proteins that can switch the GPCR from a G-protein signaling mode that transmits short-lived signals from the plasma membrane via small molecule second messengers and ion channels to a beta-arrestin signaling mode that transmits a distinct set of signals that are initiated as the receptor internalizes and transits the intracellular compartment. Acts as a signaling scaffold for MAPK pathways such as MAPK1/3 (ERK1/2). ERK1/2 activated by the beta-arrestin scaffold is largely excluded from the nucleus and confined to cytoplasmic locations such as endocytic vesicles, also called beta-arrestin signalosomes. Recruits c-Src/SRC to ADRB2 resulting in ERK activation. GPCRs for which the beta-arrestin-mediated signaling relies on both ARRB1 and ARRB2 (codependent regulation) include ADRB2, F2RL1 and PTH1R. For some GPCRs the beta-arrestin-mediated signaling relies on either ARRB1 or ARRB2 and is inhibited by the other respective beta-arrestin form (reciprocal regulation). Inhibits ERK1/2 signaling in AGTR1- and AVPR2-mediated activation (reciprocal regulation). Is required for SP-stimulated endocytosis of NK1R and recruits c-Src/SRC to internalized NK1R resulting in ERK1/2 activation, which is required for the antiapoptotic effects of SP. Is involved in proteinase-activated F2RL1-mediated ERK activity. Acts as a signaling scaffold for the AKT1 pathway. Is involved in alpha-thrombin-stimulated AKT1 signaling. Is involved in IGF1-stimulated AKT1 signaling leading to increased protection from apoptosis. Involved in activation of the p38 MAPK signaling pathway and in actin bundle formation. Involved in F2RL1-mediated cytoskeletal rearrangement and chemotaxis. Involved in AGTR1-mediated stress fiber formation by acting together with GNAQ to activate RHOA. Appears to function as signaling scaffold involved in regulation of MIP-1-beta-stimulated CCR5-dependent chemotaxis. Involved in attenuation of NF-kappa-B-dependent transcription in response to GPCR or cytokine stimulation by interacting with and stabilizing CHUK. May serve as nuclear messenger for GPCRs. Involved in OPRD1-stimulated transcriptional regulation by translocating to CDKN1B and FOS promoter regions and recruiting EP300 resulting in acetylation of histone H4. Involved in regulation of LEF1 transcriptional activity via interaction with DVL1 and/or DVL2 Also involved in regulation of receptors other than GPCRs. Involved in Toll-like receptor and IL-1 receptor signaling through the interaction with TRAF6 which prevents TRAF6 autoubiquitination and oligomerization required for activation of NF-kappa-B and JUN. Binds phosphoinositides. Binds inositolhexakisphosphate (InsP6). Involved in IL8-mediated granule release in neutrophils. Required for atypical chemokine receptor ACKR2-induced RAC1-LIMK1-PAK1-dependent phosphorylation of cofilin (CFL1) and for the up-regulation of ACKR2 from endosomal compartment to cell membrane, increasing its efficiency in chemokine uptake and degradation. Involved in the internalization of the atypical chemokine receptor ACKR3. Negatively regulates the NOTCH signaling pathway by mediating the ubiquitination and degradation of NOTCH1 by ITCH. Participates in the recruitment of the ubiquitin-protein ligase to the receptor. This Rattus norvegicus (Rat) protein is Beta-arrestin-1.